A 241-amino-acid polypeptide reads, in one-letter code: GPI-anchored hemophore RBT5 (241 aa).

Positions 1–20 (MLALSLLSIVSIASAAGVTA) are cleaved as a signal peptide. In terms of domain architecture, CFEM spans 26–137 (NPYTIFPSVA…DALAKAADAA (112 aa)). 4 disulfide bridges follow: Cys-54-Cys-94, Cys-58-Cys-89, Cys-68-Cys-75, and Cys-77-Cys-110. Residue Asp-72 participates in heme binding. Composition is skewed to low complexity over residues 140–154 (TTAE…AAET) and 163–182 (KETT…PAET). The interval 140-210 (TTAESTTAES…SVAQSSSSAA (71 aa)) is disordered. The segment covering 183-199 (SKAEETSKAAETTKAEE) has biased composition (basic and acidic residues). Over residues 200–210 (SSVAQSSSSAA) the composition is skewed to low complexity. A lipid anchor (GPI-anchor amidated asparagine) is attached at Asn-221. Positions 222 to 241 (AGNMPAVAIGGVIAAVAALF) are cleaved as a propeptide — removed in mature form.

The protein belongs to the RBT5 family. Interacts with PGA7. The GPI-anchor is attached to the protein in the endoplasmic reticulum and serves to target the protein to the cell surface. There, the glucosamine-inositol phospholipid moiety is cleaved off and the GPI-modified mannoprotein is covalently attached via its lipidless GPI glycan remnant to the 1,6-beta-glucan of the outer cell wall layer. In terms of processing, mannosylated.

The protein localises to the secreted. The protein resides in the cell wall. Its subcellular location is the cell membrane. Its function is as follows. GPI-linked hyphal surface heme-binding protein involved in heme-iron utilization. Heme transfer occurs between PGA7, RBT5 and CSA2 supporting a model in which the 3 CFEM proteins cooperate in a heme-acquisition system and form a cross-cell wall heme-transfer cascade. The ability to acquire iron from host tissues is a major virulence factor of pathogenic microorganisms. Required for biofilm formation. The chain is GPI-anchored hemophore RBT5 from Candida albicans (strain SC5314 / ATCC MYA-2876) (Yeast).